Consider the following 314-residue polypeptide: NADH-ubiquinone oxidoreductase chain 1 (314 aa).

Transmembrane regions (helical) follow at residues 5–25, 78–98, 105–125, 152–172, 176–196, 227–247, 251–271, and 294–314; these read IMPL…VAFL, FSPV…PYLI, LGVL…MIAG, ALIL…SFYF, YVWF…SCLA, LIFL…VVIF, DIYS…FIWV, and LSLN…SLLF.

The protein belongs to the complex I subunit 1 family.

Its subcellular location is the mitochondrion inner membrane. The enzyme catalyses a ubiquinone + NADH + 5 H(+)(in) = a ubiquinol + NAD(+) + 4 H(+)(out). Core subunit of the mitochondrial membrane respiratory chain NADH dehydrogenase (Complex I) that is believed to belong to the minimal assembly required for catalysis. Complex I functions in the transfer of electrons from NADH to the respiratory chain. The immediate electron acceptor for the enzyme is believed to be ubiquinone. This chain is NADH-ubiquinone oxidoreductase chain 1 (mt:ND1), found in Anopheles gambiae (African malaria mosquito).